A 145-amino-acid polypeptide reads, in one-letter code: Photosystem I reaction center subunit VI-1, chloroplastic (145 aa).

The N-terminal 50 residues, 1–50 (MASLATVAAVKPSAAIKGLGGSSLAGAKLSIKPSRLSFKPKSIRANGVVA), are a transit peptide targeting the chloroplast. Residues 102–118 (LLLKFLILGGGSLLTYV) traverse the membrane as a helical segment.

Belongs to the psaH family.

The protein localises to the plastid. It localises to the chloroplast thylakoid membrane. Functionally, possible role could be the docking of the LHC I antenna complex to the core complex. This is Photosystem I reaction center subunit VI-1, chloroplastic (PSAH1) from Arabidopsis thaliana (Mouse-ear cress).